We begin with the raw amino-acid sequence, 109 residues long: Death-associated protein-like 1 homolog (109 aa).

Disordered regions lie at residues 1–51 (MVQL…KPRS) and 76–100 (FPET…ISRI). The segment covering 31-50 (KSADENANVEKETRKTDKPR) has biased composition (basic and acidic residues).

The protein belongs to the DAP-DAPL1 family. Associates with ribosomes; preventing translation. Interacts with eiF5a (eif5a and eif5a2); preventing translation.

Ribosome-binding protein that promotes ribosome hibernation, a process during which ribosomes are stabilized in an inactive state and preserved from proteasomal degradation. Acts via its association with eiF5a (eif5a and eif5a2) at the polypeptide exit tunnel of the ribosome, preventing mRNA translation. Plays a key role in ribosome hibernation in the mature egg by preventing mRNA translation, leading to ribosome inactivation. Ribosomes, which are produced in large quantities during oogenesis, are stored and translationally repressed in the egg and early embryo. This Danio rerio (Zebrafish) protein is Death-associated protein-like 1 homolog.